A 91-amino-acid polypeptide reads, in one-letter code: Potassium channel toxin TtrKIK (91 aa).

Positions 1-25 are cleaved as a signal peptide; sequence MVATNRCCVFALLFALLLVHSLTEA. The propeptide occupies 26–44; that stretch reads GKGKEVLGKIKDKLIEAKD. The BetaSPN-type CS-alpha/beta domain maps to 58–91; sequence EYACPAIEKFCEDHCAAKKAVGKCDDFKCNCIKL. 3 disulfide bridges follow: C61-C81, C68-C86, and C72-C88.

The protein belongs to the long chain scorpion toxin family. Class 2 subfamily. Expressed by the venom gland.

It localises to the secreted. In terms of biological role, the full peptide presents antibacterial and cytotoxic activities. The synthetic C-terminus (AA 33-76) inhibits voltage-gated potassium channels Kv1.1/KCNA1, Kv1.2/KCNA2, and Kv1.3/KCNA3. This is Potassium channel toxin TtrKIK from Tityus trivittatus (Argentinean scorpion).